The following is a 286-amino-acid chain: Ribosomal RNA small subunit methyltransferase H (286 aa).

Residues 25–27, D45, L79, D93, and Q100 contribute to the S-adenosyl-L-methionine site; that span reads GGH.

The protein belongs to the methyltransferase superfamily. RsmH family.

Its subcellular location is the cytoplasm. The catalysed reaction is cytidine(1402) in 16S rRNA + S-adenosyl-L-methionine = N(4)-methylcytidine(1402) in 16S rRNA + S-adenosyl-L-homocysteine + H(+). Specifically methylates the N4 position of cytidine in position 1402 (C1402) of 16S rRNA. In Petrotoga mobilis (strain DSM 10674 / SJ95), this protein is Ribosomal RNA small subunit methyltransferase H.